The chain runs to 194 residues: Serine/threonine-protein kinase mos (194 aa).

Positions Leu-47 to Phe-194 constitute a Protein kinase domain. Residues Leu-53–Val-61 and Lys-74 each bind ATP. Asp-187 functions as the Proton acceptor in the catalytic mechanism.

It belongs to the protein kinase superfamily. Ser/Thr protein kinase family.

The catalysed reaction is L-seryl-[protein] + ATP = O-phospho-L-seryl-[protein] + ADP + H(+). It catalyses the reaction L-threonyl-[protein] + ATP = O-phospho-L-threonyl-[protein] + ADP + H(+). The chain is Serine/threonine-protein kinase mos (MOS) from Dendroaspis angusticeps (Eastern green mamba).